A 340-amino-acid polypeptide reads, in one-letter code: Glycerol-3-phosphate dehydrogenase [NAD(P)+] (340 aa).

The NADPH site is built by Ser-11, Trp-12, Arg-33, and Lys-106. The sn-glycerol 3-phosphate site is built by Lys-106, Gly-137, and Ser-139. Ala-141 provides a ligand contact to NADPH. Residues Lys-192, Asp-245, Ser-255, Arg-256, and Asn-257 each contribute to the sn-glycerol 3-phosphate site. Residue Lys-192 is the Proton acceptor of the active site. Arg-256 serves as a coordination point for NADPH. NADPH contacts are provided by Val-280 and Glu-282.

This sequence belongs to the NAD-dependent glycerol-3-phosphate dehydrogenase family.

The protein resides in the cytoplasm. It catalyses the reaction sn-glycerol 3-phosphate + NAD(+) = dihydroxyacetone phosphate + NADH + H(+). The catalysed reaction is sn-glycerol 3-phosphate + NADP(+) = dihydroxyacetone phosphate + NADPH + H(+). It participates in membrane lipid metabolism; glycerophospholipid metabolism. Functionally, catalyzes the reduction of the glycolytic intermediate dihydroxyacetone phosphate (DHAP) to sn-glycerol 3-phosphate (G3P), the key precursor for phospholipid synthesis. In Bacillus cereus (strain B4264), this protein is Glycerol-3-phosphate dehydrogenase [NAD(P)+].